Consider the following 397-residue polypeptide: S-adenosylmethionine synthase (397 aa).

Histidine 15 serves as a coordination point for ATP. Position 17 (aspartate 17) interacts with Mg(2+). Position 43 (glutamate 43) interacts with K(+). 2 residues coordinate L-methionine: glutamate 56 and glutamine 99. The segment at glutamine 99 to lysine 109 is flexible loop. ATP contacts are provided by residues aspartate 175 to lysine 177, arginine 241 to phenylalanine 242, aspartate 250, arginine 256 to lysine 257, alanine 273, and lysine 277. Aspartate 250 lines the L-methionine pocket. Lysine 281 serves as a coordination point for L-methionine.

It belongs to the AdoMet synthase family. Homotetramer; dimer of dimers. It depends on Mg(2+) as a cofactor. K(+) serves as cofactor.

The protein localises to the cytoplasm. It carries out the reaction L-methionine + ATP + H2O = S-adenosyl-L-methionine + phosphate + diphosphate. The protein operates within amino-acid biosynthesis; S-adenosyl-L-methionine biosynthesis; S-adenosyl-L-methionine from L-methionine: step 1/1. In terms of biological role, catalyzes the formation of S-adenosylmethionine (AdoMet) from methionine and ATP. The overall synthetic reaction is composed of two sequential steps, AdoMet formation and the subsequent tripolyphosphate hydrolysis which occurs prior to release of AdoMet from the enzyme. The chain is S-adenosylmethionine synthase from Acetivibrio thermocellus (strain ATCC 27405 / DSM 1237 / JCM 9322 / NBRC 103400 / NCIMB 10682 / NRRL B-4536 / VPI 7372) (Clostridium thermocellum).